The primary structure comprises 185 residues: Large ribosomal subunit protein uL5 (185 aa).

The protein belongs to the universal ribosomal protein uL5 family. As to quaternary structure, part of the 50S ribosomal subunit; part of the 5S rRNA/L5/L18/L25 subcomplex. Contacts the 5S rRNA and the P site tRNA. Forms a bridge to the 30S subunit in the 70S ribosome.

In terms of biological role, this is one of the proteins that bind and probably mediate the attachment of the 5S RNA into the large ribosomal subunit, where it forms part of the central protuberance. In the 70S ribosome it contacts protein S13 of the 30S subunit (bridge B1b), connecting the 2 subunits; this bridge is implicated in subunit movement. Contacts the P site tRNA; the 5S rRNA and some of its associated proteins might help stabilize positioning of ribosome-bound tRNAs. In Parabacteroides distasonis (strain ATCC 8503 / DSM 20701 / CIP 104284 / JCM 5825 / NCTC 11152), this protein is Large ribosomal subunit protein uL5.